The chain runs to 142 residues: Large ribosomal subunit protein uL16 (142 aa).

Positions 1–14 (MLSPRRTKFRKQQR) are enriched in basic residues. The segment at 1–22 (MLSPRRTKFRKQQRGRMTGKAT) is disordered.

It belongs to the universal ribosomal protein uL16 family. As to quaternary structure, part of the 50S ribosomal subunit.

Its function is as follows. Binds 23S rRNA and is also seen to make contacts with the A and possibly P site tRNAs. This Synechococcus elongatus (strain ATCC 33912 / PCC 7942 / FACHB-805) (Anacystis nidulans R2) protein is Large ribosomal subunit protein uL16.